We begin with the raw amino-acid sequence, 295 residues long: Taste receptor type 2 member 120 (295 aa).

Residues Met1 to Glu5 lie on the Extracellular side of the membrane. Residues Trp6–Ile26 traverse the membrane as a helical segment. The Cytoplasmic portion of the chain corresponds to Thr27–Arg45. Residues Ile46–His66 form a helical membrane-spanning segment. The Extracellular portion of the chain corresponds to Ser67 to Arg80. The helical transmembrane segment at Val81–Leu101 threads the bilayer. Residues Ser102–Val127 lie on the Cytoplasmic side of the membrane. A helical transmembrane segment spans residues Leu128–Ile148. The Extracellular portion of the chain corresponds to Lys149–Leu177. Residue Asn160 is glycosylated (N-linked (GlcNAc...) asparagine). A helical transmembrane segment spans residues Leu178–Ile198. At Tyr199–Gln228 the chain is on the cytoplasmic side. A helical transmembrane segment spans residues Thr229–Trp249. The Extracellular portion of the chain corresponds to Ser250–Pro255. Residues Val256–Ile276 form a helical membrane-spanning segment. Over Trp277–Cys295 the chain is Cytoplasmic.

Belongs to the G-protein coupled receptor T2R family.

The protein resides in the membrane. Functionally, putative taste receptor which may play a role in the perception of bitterness. The sequence is that of Taste receptor type 2 member 120 from Mus musculus (Mouse).